Consider the following 449-residue polypeptide: N-succinylarginine dihydrolase (449 aa).

Substrate-binding positions include 19–28 (GGLSYGNVAS), Asn-110, and 137–138 (HR). The segment at 23-43 (YGNVASQSNSQQGSNPREAAR) is disordered. Positions 25–37 (NVASQSNSQQGSN) are enriched in polar residues. Residue Glu-174 is part of the active site. Residue Arg-214 coordinates substrate. His-250 is a catalytic residue. Substrate contacts are provided by Asp-252 and Asn-365. Catalysis depends on Cys-371, which acts as the Nucleophile.

This sequence belongs to the succinylarginine dihydrolase family. Homodimer.

It catalyses the reaction N(2)-succinyl-L-arginine + 2 H2O + 2 H(+) = N(2)-succinyl-L-ornithine + 2 NH4(+) + CO2. It participates in amino-acid degradation; L-arginine degradation via AST pathway; L-glutamate and succinate from L-arginine: step 2/5. In terms of biological role, catalyzes the hydrolysis of N(2)-succinylarginine into N(2)-succinylornithine, ammonia and CO(2). The chain is N-succinylarginine dihydrolase from Pseudomonas entomophila (strain L48).